Consider the following 100-residue polypeptide: Co-chaperonin GroES (100 aa).

It belongs to the GroES chaperonin family. Heptamer of 7 subunits arranged in a ring. Interacts with the chaperonin GroEL.

It is found in the cytoplasm. In terms of biological role, together with the chaperonin GroEL, plays an essential role in assisting protein folding. The GroEL-GroES system forms a nano-cage that allows encapsulation of the non-native substrate proteins and provides a physical environment optimized to promote and accelerate protein folding. GroES binds to the apical surface of the GroEL ring, thereby capping the opening of the GroEL channel. This chain is Co-chaperonin GroES, found in Mycobacterium marinum (strain ATCC BAA-535 / M).